Here is a 162-residue protein sequence, read N- to C-terminus: Ribosome-binding factor A (162 aa).

The segment at 123-162 (VARVAAGASPAGDPDPYKEPRVEDADDAEVDEPSRSRQAD) is disordered. Residues 125 to 136 (RVAAGASPAGDP) show a composition bias toward low complexity.

Belongs to the RbfA family. Monomer. Binds 30S ribosomal subunits, but not 50S ribosomal subunits or 70S ribosomes.

It localises to the cytoplasm. Functionally, one of several proteins that assist in the late maturation steps of the functional core of the 30S ribosomal subunit. Associates with free 30S ribosomal subunits (but not with 30S subunits that are part of 70S ribosomes or polysomes). Required for efficient processing of 16S rRNA. May interact with the 5'-terminal helix region of 16S rRNA. This is Ribosome-binding factor A from Rhodococcus opacus (strain B4).